The primary structure comprises 86 residues: Electron transfer flavoprotein regulatory factor 1 (86 aa).

The protein belongs to the complex I LYR family. Homotetramer. Interacts with NDUFAB1. Interacts with ETFA. Interacts with ETFB.

Its subcellular location is the mitochondrion. Its function is as follows. Acts as a regulator of the electron transfer flavoprotein by promoting the removal of flavin from the ETF holoenzyme (composed of ETFA and ETFB). The chain is Electron transfer flavoprotein regulatory factor 1 from Mus musculus (Mouse).